The chain runs to 595 residues: Elongation factor 4 (595 aa).

One can recognise a tr-type G domain in the interval Lys2 to Lys184. Residues Asp14–Thr19 and Asn131–Asp134 each bind GTP.

This sequence belongs to the TRAFAC class translation factor GTPase superfamily. Classic translation factor GTPase family. LepA subfamily.

Its subcellular location is the cell inner membrane. It catalyses the reaction GTP + H2O = GDP + phosphate + H(+). In terms of biological role, required for accurate and efficient protein synthesis under certain stress conditions. May act as a fidelity factor of the translation reaction, by catalyzing a one-codon backward translocation of tRNAs on improperly translocated ribosomes. Back-translocation proceeds from a post-translocation (POST) complex to a pre-translocation (PRE) complex, thus giving elongation factor G a second chance to translocate the tRNAs correctly. Binds to ribosomes in a GTP-dependent manner. The protein is Elongation factor 4 of Ruthia magnifica subsp. Calyptogena magnifica.